Reading from the N-terminus, the 876-residue chain is MAP7 domain-containing protein 3 (876 aa).

Disordered regions lie at residues 30 to 139 (AEER…KFKA), 162 to 200 (GGVM…VDNT), and 402 to 438 (TEAP…IDKR). Positions 39–54 (INSSAGANKRSSSTPD) are enriched in polar residues. Residues 58-136 (LKNDVKQQLA…KQKQAEDTEK (79 aa)) are a coiled coil. Composition is skewed to basic and acidic residues over residues 60–139 (NDVK…KFKA) and 169–196 (KSGK…DMQH). A phosphoserine mark is found at Ser-417 and Ser-483. Coiled coils occupy residues 549–578 (IQIR…IARK) and 626–658 (SAMM…RRKA). 2 disordered regions span residues 558 to 683 (QSKN…EIFP) and 742 to 783 (IQGK…NPNH). Basic and acidic residues-rich tracts occupy residues 559-590 (SKNE…DKVP) and 630-659 (KSRD…RKAS). Acidic residues predominate over residues 665–679 (SEDEADDEGESEDSL). Residues 750 to 763 (SAKKPPTRPIRSRK) are compositionally biased toward basic residues. A compositionally biased stretch (polar residues) spans 771 to 782 (IRPTQSASSNPN).

It belongs to the MAP7 family. In terms of tissue distribution, high expression in lung, skeletal muscle, brain, and kidney, with much weaker expression in spleen, small intestine, liver, and heart.

The protein resides in the cytoplasm. It localises to the cytoskeleton. The protein localises to the spindle. Functionally, promotes the assembly and stability of microtubules. The chain is MAP7 domain-containing protein 3 (Map7d3) from Mus musculus (Mouse).